Consider the following 681-residue polypeptide: Chaperone protein HtpG (681 aa).

An a; substrate-binding region spans residues 1 to 326 (MQKGNIGVTT…SPDIPLNVSR (326 aa)). Residues 327-545 (SYLQSDSNVK…YMRRMKEMAN (219 aa)) are b. The interval 546–681 (IQAGMSFYGE…NFVKRSIELI (136 aa)) is c. The tract at residues 601 to 620 (DALKKKQEGKKDEDIPTAEK) is disordered.

It belongs to the heat shock protein 90 family. In terms of assembly, homodimer.

It localises to the cytoplasm. Functionally, molecular chaperone. Has ATPase activity. The polypeptide is Chaperone protein HtpG (Bacteroides fragilis (strain ATCC 25285 / DSM 2151 / CCUG 4856 / JCM 11019 / LMG 10263 / NCTC 9343 / Onslow / VPI 2553 / EN-2)).